Consider the following 389-residue polypeptide: Liposome tubulation protein MamY (389 aa).

The Cytoplasmic portion of the chain corresponds to 1-31 (MAIAAIMGDVLMLMGFNKAAFGKLNSASRAA). The helical transmembrane segment at 32 to 52 (LIGAVIWAVLSIVYLTIFNGW) threads the bilayer. Residues 53-62 (KNLFTMLPHE) lie on the Lumenal side of the membrane. A helical transmembrane segment spans residues 63 to 83 (FFIVLLSIALPIGLTVLILML). Residues 84-389 (SRIVKSVDTL…TETAPDSGMD (306 aa)) lie on the Cytoplasmic side of the membrane.

It belongs to the magnetosome MamY family.

The protein resides in the magnetosome membrane. Its function is as follows. Causes tubulation when added to magnetosome-derived liposomes, binds liposomes; may be involved in constriction of the cell inner membrane to form mature magnetosomes. Binds preferentially to cardiolipin, a component of bacterial membranes, with very poor to no binding of other tested (phospho)lipids. Addition of cardiolipin to magnetosome-derived lipids increases tubulation. May function with MamX, MamZ amd Mms6. The chain is Liposome tubulation protein MamY from Paramagnetospirillum magneticum (strain ATCC 700264 / AMB-1) (Magnetospirillum magneticum).